The following is a 406-amino-acid chain: chitinase-like effector (406 aa).

The N-terminal stretch at 1–23 is a signal peptide; the sequence is MLTLLPSLILLLSTLSLSTPANA. Residues 26-405 form the GH18 domain; that stretch reads AIAKAYYPGW…DAVRHGAGFK (380 aa). Residues tyrosine 138 and tryptophan 384 each contribute to the chitin site.

It belongs to the glycosyl hydrolase 18 family.

Its subcellular location is the secreted. Its function is as follows. Catalytically impaired chitinase that binds efficiently to chitin, but not to chitosan, xylan, or cellulose. Despite the lack of chitinolytic activity, retains substrate binding specificity and acts as an effector to prevent chitin-triggered immunity by sequestering immunogenic chitin fragments. This Moniliophthora roreri (Frosty pod rot fungus) protein is chitinase-like effector (Chi).